A 501-amino-acid chain; its full sequence is L-arabinose isomerase (501 aa).

Glu-307, Glu-334, His-351, and His-450 together coordinate Mn(2+).

This sequence belongs to the arabinose isomerase family. Requires Mn(2+) as cofactor.

It catalyses the reaction beta-L-arabinopyranose = L-ribulose. The protein operates within carbohydrate degradation; L-arabinose degradation via L-ribulose; D-xylulose 5-phosphate from L-arabinose (bacterial route): step 1/3. Functionally, catalyzes the conversion of L-arabinose to L-ribulose. The protein is L-arabinose isomerase of Acidothermus cellulolyticus (strain ATCC 43068 / DSM 8971 / 11B).